The primary structure comprises 1156 residues: Chromosome partition protein Smc (1156 aa).

37-44 (PNGAGKSN) provides a ligand contact to ATP. Residues 167–499 (SGIGEYERKK…AIEREVRSFS (333 aa)) adopt a coiled-coil conformation. An SMC hinge domain is found at 509-624 (KGVYGSVSEL…VENFESAKAI (116 aa)). Positions 654-1001 (GELNKRYYEE…EETENKKRKV (348 aa)) form a coiled coil.

The protein belongs to the SMC family. As to quaternary structure, homodimer.

Its subcellular location is the cytoplasm. In terms of biological role, required for chromosome condensation and partitioning. The polypeptide is Chromosome partition protein Smc (Aquifex aeolicus (strain VF5)).